Here is a 91-residue protein sequence, read N- to C-terminus: Acylphosphatase (91 aa).

Residues 3–90 (QYRIIVDGRV…EGHHRFSIVY (88 aa)) enclose the Acylphosphatase-like domain. Residues arginine 18 and asparagine 36 contribute to the active site.

It belongs to the acylphosphatase family.

The catalysed reaction is an acyl phosphate + H2O = a carboxylate + phosphate + H(+). The polypeptide is Acylphosphatase (acyP) (Bacillus subtilis (strain 168)).